We begin with the raw amino-acid sequence, 371 residues long: Poly(rC)-binding protein 3 (371 aa).

3 KH domains span residues 45–95 (TLTI…TITG), 129–182 (PVTL…TISG), and 293–357 (ASTH…QYLI).

Its subcellular location is the cytoplasm. Functionally, single-stranded nucleic acid binding protein that binds preferentially to oligo dC. This is Poly(rC)-binding protein 3 from Homo sapiens (Human).